Reading from the N-terminus, the 685-residue chain is RING finger protein 145 (685 aa).

13 helical membrane passes run 53 to 73 (YIAL…LTLP), 77 to 97 (LVQL…HQLS), 123 to 143 (FTTA…VMQT), 151 to 171 (AHLL…IVFI), 174 to 194 (FAMI…LLVP), 225 to 245 (LVLP…QIYT), 275 to 295 (YSLL…LTLC), 316 to 336 (TEGI…LQVI), 340 to 360 (FLLS…MLEI), 384 to 404 (SLCL…CQFF), 410 to 430 (LLII…TLLI), 460 to 480 (LLEF…TLFG), and 482 to 502 (WTVM…WLRA). Residues 537-575 (CSICFQDMKSAVITPCSHFFHAACLKKWLYVQETCPLCH) form an RING-type; atypical zinc finger. Residues 582–685 (LQPTSSPGTP…VSTSDVNCAS (104 aa)) form a disordered region. Positions 583–602 (QPTSSPGTPTQGTPAANQNP) are enriched in low complexity. Over residues 620–631 (EGIRAEEMKTSA) the composition is skewed to basic and acidic residues.

Its subcellular location is the membrane. This is RING finger protein 145 (rnf145) from Danio rerio (Zebrafish).